A 659-amino-acid chain; its full sequence is uncharacterized protein (659 aa).

Residues 1-25 form the signal peptide; that stretch reads MVKRRLSAFGNAFLIYFIIFRLCCC. Over 26–556 the chain is Lumenal; sequence SPQTSHWCKY…LYQESSFQKR (531 aa). Asparagine 94, asparagine 111, asparagine 128, and asparagine 142 each carry an N-linked (GlcNAc...) asparagine glycan. The region spanning 173 to 335 is the SUN domain; sequence AATIDSNIDE…SLLRVYGKTM (163 aa). 2 N-linked (GlcNAc...) asparagine glycosylation sites follow: asparagine 393 and asparagine 415. A disordered region spans residues 417 to 445; it reads TGKSESYPATSTRSFNDISPSSSSSYSTA. Over residues 423 to 434 the composition is skewed to polar residues; the sequence is YPATSTRSFNDI. N-linked (GlcNAc...) asparagine glycosylation is found at asparagine 495 and asparagine 504. A helical membrane pass occupies residues 557–574; that stretch reads LLMLQLTVLIVLTVYMAV. The Cytoplasmic portion of the chain corresponds to 575–659; it reads SRLPENLPTT…IIHSRSHSVC (85 aa). Disordered stretches follow at residues 580-603 and 632-659; these read NLPT…SRDE and KRDP…HSVC. The segment covering 581-592 has biased composition (polar residues); that stretch reads LPTTRSSSNNPI. Basic and acidic residues predominate over residues 641–651; that stretch reads SIHEREQDKII.

This sequence belongs to the SLP1 family. In terms of assembly, interacts with EMP65.

Its subcellular location is the endoplasmic reticulum membrane. Functionally, may be involved in membrane protein folding. This is an uncharacterized protein from Schizosaccharomyces pombe (strain 972 / ATCC 24843) (Fission yeast).